The primary structure comprises 351 residues: Type II methyltransferase M.DsaV (351 aa).

One can recognise an SAM-dependent MTase C5-type domain in the interval 6 to 312 (LKFIDLFAGI…QKMLSYIDLT (307 aa)). Cys75 is a catalytic residue.

Belongs to the class I-like SAM-binding methyltransferase superfamily. C5-methyltransferase family.

It carries out the reaction a 2'-deoxycytidine in DNA + S-adenosyl-L-methionine = a 5-methyl-2'-deoxycytidine in DNA + S-adenosyl-L-homocysteine + H(+). In terms of biological role, a methylase, recognizes the double-stranded sequence 5'-CCNGG-3', methylates C-2 on both strands, and protects the DNA from cleavage by the DsaV endonuclease. The sequence is that of Type II methyltransferase M.DsaV from Dactylococcopsis salina (Myxobaktron salinum).